A 368-amino-acid chain; its full sequence is NAD(P)H-quinone oxidoreductase subunit 1, chloroplastic (368 aa).

The next 9 helical transmembrane spans lie at 27 to 47 (FLWI…GVLV), 97 to 117 (WLFN…YLVI), 130 to 150 (IGVF…LMAG), 166 to 186 (AAQS…IALL), 204 to 224 (FLSW…IASL), 249 to 269 (YSGM…LVSS), 270 to 290 (LFVT…FSLF), 305 to 325 (VISI…FLFI), and 348 to 368 (FLLP…LFLL).

Belongs to the complex I subunit 1 family. NDH is composed of at least 16 different subunits, 5 of which are encoded in the nucleus.

Its subcellular location is the plastid. The protein localises to the chloroplast thylakoid membrane. It catalyses the reaction a plastoquinone + NADH + (n+1) H(+)(in) = a plastoquinol + NAD(+) + n H(+)(out). It carries out the reaction a plastoquinone + NADPH + (n+1) H(+)(in) = a plastoquinol + NADP(+) + n H(+)(out). Functionally, NDH shuttles electrons from NAD(P)H:plastoquinone, via FMN and iron-sulfur (Fe-S) centers, to quinones in the photosynthetic chain and possibly in a chloroplast respiratory chain. The immediate electron acceptor for the enzyme in this species is believed to be plastoquinone. Couples the redox reaction to proton translocation, and thus conserves the redox energy in a proton gradient. This chain is NAD(P)H-quinone oxidoreductase subunit 1, chloroplastic, found in Marchantia polymorpha (Common liverwort).